Consider the following 143-residue polypeptide: Nucleoside diphosphate kinase 2 (143 aa).

The ATP site is built by Lys-11, Phe-59, Arg-87, Thr-93, Arg-104, and Asn-114. His-117 (pros-phosphohistidine intermediate) is an active-site residue.

This sequence belongs to the NDK family. In terms of assembly, homotetramer. Requires Mg(2+) as cofactor.

The protein resides in the cytoplasm. It carries out the reaction a 2'-deoxyribonucleoside 5'-diphosphate + ATP = a 2'-deoxyribonucleoside 5'-triphosphate + ADP. The catalysed reaction is a ribonucleoside 5'-diphosphate + ATP = a ribonucleoside 5'-triphosphate + ADP. Functionally, major role in the synthesis of nucleoside triphosphates other than ATP. The ATP gamma phosphate is transferred to the NDP beta phosphate via a ping-pong mechanism, using a phosphorylated active-site intermediate. The sequence is that of Nucleoside diphosphate kinase 2 from Protochlamydia amoebophila (strain UWE25).